We begin with the raw amino-acid sequence, 134 residues long: MARVTVEDCIDKVENRFELVLLASHRARLISQGASITIDRDNDKNPVVALREIADETLSPDDLKEDLIHSLQKHVEVDEPEPDPASMIAAGGVAAADSEEQDDLPETITFDQMSEEELLAGIEGLVPPEKSDDY.

It belongs to the RNA polymerase subunit omega family. As to quaternary structure, the RNAP catalytic core consists of 2 alpha, 1 beta, 1 beta' and 1 omega subunit. When a sigma factor is associated with the core the holoenzyme is formed, which can initiate transcription.

It carries out the reaction RNA(n) + a ribonucleoside 5'-triphosphate = RNA(n+1) + diphosphate. Its function is as follows. Promotes RNA polymerase assembly. Latches the N- and C-terminal regions of the beta' subunit thereby facilitating its interaction with the beta and alpha subunits. This is DNA-directed RNA polymerase subunit omega from Rhizobium etli (strain CIAT 652).